The primary structure comprises 752 residues: Polyribonucleotide nucleotidyltransferase (752 aa).

Residues aspartate 519 and aspartate 525 each coordinate Mg(2+). A KH domain is found at 585–644 (PRVIAVKIPVDKIGEVIGPKGKMINQIQEDTGADISIEDDGTVYIGATNGPSADAARSAI). The S1 motif domain occupies 656 to 728 (GERYLGTVVK…DRGKLSLSPV (73 aa)). The tract at residues 727–752 (PVVAEEEGAEGAERAHATEPAEGAEI) is disordered.

This sequence belongs to the polyribonucleotide nucleotidyltransferase family. Requires Mg(2+) as cofactor.

It is found in the cytoplasm. It catalyses the reaction RNA(n+1) + phosphate = RNA(n) + a ribonucleoside 5'-diphosphate. Its function is as follows. Involved in mRNA degradation. Catalyzes the phosphorolysis of single-stranded polyribonucleotides processively in the 3'- to 5'-direction. The chain is Polyribonucleotide nucleotidyltransferase from Pseudarthrobacter chlorophenolicus (strain ATCC 700700 / DSM 12829 / CIP 107037 / JCM 12360 / KCTC 9906 / NCIMB 13794 / A6) (Arthrobacter chlorophenolicus).